The sequence spans 329 residues: MGRTSKDKRDVYYRLAKENGWRARSAFKLLQLDKEFQLFQGVTRAVDLCAAPGSWSQVLSQKIGGQGSGHVVAVDLQAMAPLPGVVQIQGDITQLSTAKEIIQHFKGCPADLVVCDGAPDVTGLHDVDEYMQAQLLLAALNIATHVLKPGGCFVAKIFRGRDVTLLYSQLQVFFSSVLCAKPRSSRNSSIEAFAVCQGYDPPEGFIPDLSKPLLDHSYDPDFNQLDGPTRIIVPFVTCGDLSSYDSDRSYPLDLEGGSEYKYTPPTQPPISPPYQEACTLKRKGQLAKEIRPQDCPISRVDTFPQPLAAPQCHTLLAPEMEDNEMSCSP.

Residues Gly53, Trp55, Asp75, Asp91, and Asp116 each contribute to the S-adenosyl-L-methionine site. Lys156 functions as the Proton acceptor in the catalytic mechanism. Residues Asp221–Asp240 are required for binding to WDR6. A Phosphoserine modification is found at Ser271.

It belongs to the class I-like SAM-binding methyltransferase superfamily. RNA methyltransferase RlmE family. TRM7 subfamily. Interacts with WDR6; the interaction is direct, and required for 2'-O-methylation of position 34 in substrate tRNAs. Found in fetal brain, lung, liver and kidney. Widely expressed in adult tissue; with high expression in heart and liver, lower expression in skeletal muscle, kidney, and pancreas and also lowly expressed in brain and lung. In the adult brain, expressed in amygdala, caudate nucleus, corpus callosum, hippocampus and thalamus.

Its subcellular location is the cytoplasm. It localises to the nucleus. The enzyme catalyses cytidine(32)/guanosine(34) in tRNA + 2 S-adenosyl-L-methionine = 2'-O-methylcytidine(32)/2'-O-methylguanosine(34) in tRNA + 2 S-adenosyl-L-homocysteine + 2 H(+). Inhibited by 2,6-diaminopurine (DAP); inhibition promotes UGA stop-codon readthrough during translation by misincorporation of tRNA(Trp) in the nascent polypeptide. Its function is as follows. Methylates the 2'-O-ribose of nucleotides at positions 32 and 34 of the tRNA anticodon loop of substrate tRNAs. Requisite for faithful cytoplasmic translation. Requires THADA for methylation of the nucleotide at position 32 of the anticodon loop of substrate tRNAs. Requires WDR6 for methylation of the nucleotide at position 34 of the anticodon loop of substrate tRNAs. Promotes translation efficiency of the UUU codon. Plays a role in neurogenesis. Required for expression of genes involved in neurogenesis, mitochondrial translation and energy generation, and lipid biosynthesis. Requisite for RNA-mediated gene silencing. May modify position 32 in tRNA(Arg(ACG)), tRNA(Arg(CCG)), tRNA(Arg(UCG)), tRNA(Cys(GCA)), tRNA(Cys(ACA)), tRNA(Gln(CUG)), tRNA(Gln(UUG)), tRNA(Gly(CCC)), tRNA(Leu(CAG))/tRNA(Leu(CAA)), tRNA(Leu(A/IAG)), tRNA(Leu(UAG)), tRNA(Phe(GAA)), tRNA(Pro(AGG))/tRNA(Pro(CGG))/tRNA(Pro(UGG)) and tRNA(Trp(CCA)), and position 34 in tRNA(Phe(GAA)), tRNA(Leu(CAA)), tRNA(Sec(UCA)), and tRNA(Trp(CCA)). The polypeptide is tRNA (cytidine(32)/guanosine(34)-2'-O)-methyltransferase (Homo sapiens (Human)).